Here is a 109-residue protein sequence, read N- to C-terminus: T cell receptor alpha variable 26-2 (109 aa).

Residues M1 to A19 form the signal peptide. Residues K20–D109 enclose the Ig-like domain. A disulfide bridge links C39 with C105. An N-linked (GlcNAc...) asparagine glycan is attached at N40.

In terms of assembly, alpha-beta TR is a heterodimer composed of an alpha and beta chain; disulfide-linked. The alpha-beta TR is associated with the transmembrane signaling CD3 coreceptor proteins to form the TR-CD3 (TcR or TCR). The assembly of alpha-beta TR heterodimers with CD3 occurs in the endoplasmic reticulum where a single alpha-beta TR heterodimer associates with one CD3D-CD3E heterodimer, one CD3G-CD3E heterodimer and one CD247 homodimer forming a stable octameric structure. CD3D-CD3E and CD3G-CD3E heterodimers preferentially associate with TR alpha and TR beta chains, respectively. The association of the CD247 homodimer is the last step of TcR assembly in the endoplasmic reticulum and is required for transport to the cell surface.

The protein resides in the cell membrane. Its function is as follows. V region of the variable domain of T cell receptor (TR) alpha chain that participates in the antigen recognition. Alpha-beta T cell receptors are antigen specific receptors which are essential to the immune response and are present on the cell surface of T lymphocytes. Recognize peptide-major histocompatibility (MH) (pMH) complexes that are displayed by antigen presenting cells (APC), a prerequisite for efficient T cell adaptive immunity against pathogens. Binding of alpha-beta TR to pMH complex initiates TR-CD3 clustering on the cell surface and intracellular activation of LCK that phosphorylates the ITAM motifs of CD3G, CD3D, CD3E and CD247 enabling the recruitment of ZAP70. In turn ZAP70 phosphorylates LAT, which recruits numerous signaling molecules to form the LAT signalosome. The LAT signalosome propagates signal branching to three major signaling pathways, the calcium, the mitogen-activated protein kinase (MAPK) kinase and the nuclear factor NF-kappa-B (NF-kB) pathways, leading to the mobilization of transcription factors that are critical for gene expression and essential for T cell growth and differentiation. The T cell repertoire is generated in the thymus, by V-(D)-J rearrangement. This repertoire is then shaped by intrathymic selection events to generate a peripheral T cell pool of self-MH restricted, non-autoaggressive T cells. Post-thymic interaction of alpha-beta TR with the pMH complexes shapes TR structural and functional avidity. This Homo sapiens (Human) protein is T cell receptor alpha variable 26-2.